The chain runs to 466 residues: Exodeoxyribonuclease 7 large subunit (466 aa).

It belongs to the XseA family. In terms of assembly, heterooligomer composed of large and small subunits.

It localises to the cytoplasm. It carries out the reaction Exonucleolytic cleavage in either 5'- to 3'- or 3'- to 5'-direction to yield nucleoside 5'-phosphates.. Its function is as follows. Bidirectionally degrades single-stranded DNA into large acid-insoluble oligonucleotides, which are then degraded further into small acid-soluble oligonucleotides. The protein is Exodeoxyribonuclease 7 large subunit of Ruthia magnifica subsp. Calyptogena magnifica.